We begin with the raw amino-acid sequence, 263 residues long: Trans-2-decenoyl-[acyl-carrier-protein] isomerase (263 aa).

This sequence belongs to the enoyl-CoA hydratase/isomerase family. In terms of assembly, homotetramer.

It carries out the reaction (2E)-decenoyl-[ACP] = (3Z)-decenoyl-[ACP]. Its pathway is lipid metabolism; fatty acid biosynthesis. In terms of biological role, catalyzes the isomerization of trans-2-decenoyl-ACP to cis-3-decenoyl-ACP. Required for survival at low pH. The polypeptide is Trans-2-decenoyl-[acyl-carrier-protein] isomerase (fabM) (Streptococcus mutans serotype c (strain ATCC 700610 / UA159)).